The following is a 130-amino-acid chain: Putative transposase for insertion sequence element IS6501 (130 aa).

This sequence belongs to the transposase 11 family.

Its function is as follows. Involved in the transposition of the insertion sequence. This chain is Putative transposase for insertion sequence element IS6501, found in Brucella ovis (strain ATCC 25840 / 63/290 / NCTC 10512).